The primary structure comprises 354 residues: Chorismate synthase (354 aa).

Arginine 46 provides a ligand contact to NADP(+). Residues 123–125, 239–240, glycine 284, 299–303, and arginine 325 each bind FMN; these read RSS, NA, and KPVAT.

It belongs to the chorismate synthase family. Homotetramer. The cofactor is FMNH2.

The enzyme catalyses 5-O-(1-carboxyvinyl)-3-phosphoshikimate = chorismate + phosphate. It functions in the pathway metabolic intermediate biosynthesis; chorismate biosynthesis; chorismate from D-erythrose 4-phosphate and phosphoenolpyruvate: step 7/7. Catalyzes the anti-1,4-elimination of the C-3 phosphate and the C-6 proR hydrogen from 5-enolpyruvylshikimate-3-phosphate (EPSP) to yield chorismate, which is the branch point compound that serves as the starting substrate for the three terminal pathways of aromatic amino acid biosynthesis. This reaction introduces a second double bond into the aromatic ring system. In Azobacteroides pseudotrichonymphae genomovar. CFP2, this protein is Chorismate synthase.